We begin with the raw amino-acid sequence, 227 residues long: Cytochrome c oxidase subunit 2 (227 aa).

Residues 1-14 are Mitochondrial intermembrane-facing; the sequence is MAHAAQVGLQDATS. A helical membrane pass occupies residues 15–45; the sequence is PIMEELVIFHDHALMIIFLICFLVLYALFLT. At 46 to 59 the chain is on the mitochondrial matrix side; that stretch reads LTTKLTNTSISDAQ. Residues 60 to 87 form a helical membrane-spanning segment; sequence EMETIWTILPAIILILIALPSLRILYLT. Topologically, residues 88 to 227 are mitochondrial intermembrane; that stretch reads DEINDPSFTI…IFEMGPVFTL (140 aa). Residues H161, C196, E198, C200, H204, and M207 each coordinate Cu cation. E198 lines the Mg(2+) pocket.

This sequence belongs to the cytochrome c oxidase subunit 2 family. As to quaternary structure, component of the cytochrome c oxidase (complex IV, CIV), a multisubunit enzyme composed of 14 subunits. The complex is composed of a catalytic core of 3 subunits MT-CO1, MT-CO2 and MT-CO3, encoded in the mitochondrial DNA, and 11 supernumerary subunits COX4I, COX5A, COX5B, COX6A, COX6B, COX6C, COX7A, COX7B, COX7C, COX8 and NDUFA4, which are encoded in the nuclear genome. The complex exists as a monomer or a dimer and forms supercomplexes (SCs) in the inner mitochondrial membrane with NADH-ubiquinone oxidoreductase (complex I, CI) and ubiquinol-cytochrome c oxidoreductase (cytochrome b-c1 complex, complex III, CIII), resulting in different assemblies (supercomplex SCI(1)III(2)IV(1) and megacomplex MCI(2)III(2)IV(2)). Found in a complex with TMEM177, COA6, COX18, COX20, SCO1 and SCO2. Interacts with TMEM177 in a COX20-dependent manner. Interacts with COX20. Interacts with COX16. Requires Cu cation as cofactor.

The protein localises to the mitochondrion inner membrane. It carries out the reaction 4 Fe(II)-[cytochrome c] + O2 + 8 H(+)(in) = 4 Fe(III)-[cytochrome c] + 2 H2O + 4 H(+)(out). In terms of biological role, component of the cytochrome c oxidase, the last enzyme in the mitochondrial electron transport chain which drives oxidative phosphorylation. The respiratory chain contains 3 multisubunit complexes succinate dehydrogenase (complex II, CII), ubiquinol-cytochrome c oxidoreductase (cytochrome b-c1 complex, complex III, CIII) and cytochrome c oxidase (complex IV, CIV), that cooperate to transfer electrons derived from NADH and succinate to molecular oxygen, creating an electrochemical gradient over the inner membrane that drives transmembrane transport and the ATP synthase. Cytochrome c oxidase is the component of the respiratory chain that catalyzes the reduction of oxygen to water. Electrons originating from reduced cytochrome c in the intermembrane space (IMS) are transferred via the dinuclear copper A center (CU(A)) of subunit 2 and heme A of subunit 1 to the active site in subunit 1, a binuclear center (BNC) formed by heme A3 and copper B (CU(B)). The BNC reduces molecular oxygen to 2 water molecules using 4 electrons from cytochrome c in the IMS and 4 protons from the mitochondrial matrix. This Pongo abelii (Sumatran orangutan) protein is Cytochrome c oxidase subunit 2 (MT-CO2).